A 217-amino-acid chain; its full sequence is Cytidylate kinase (217 aa).

ATP is bound at residue 10–18; sequence GPAGAGKST.

This sequence belongs to the cytidylate kinase family. Type 1 subfamily.

The protein localises to the cytoplasm. The catalysed reaction is CMP + ATP = CDP + ADP. It carries out the reaction dCMP + ATP = dCDP + ADP. The polypeptide is Cytidylate kinase (Alkaliphilus oremlandii (strain OhILAs) (Clostridium oremlandii (strain OhILAs))).